A 96-amino-acid polypeptide reads, in one-letter code: Myoglobin (96 aa).

In terms of domain architecture, Globin spans 1-96; sequence GLSDGEWQLV…AKTKELGFLG (96 aa). Residue Ser3 is modified to Phosphoserine. Position 61 (His61) interacts with nitrite. O2 is bound at residue His61. Thr64 carries the post-translational modification Phosphothreonine.

The protein belongs to the globin family. Monomeric.

It is found in the cytoplasm. The protein localises to the sarcoplasm. The catalysed reaction is Fe(III)-heme b-[protein] + nitric oxide + H2O = Fe(II)-heme b-[protein] + nitrite + 2 H(+). The enzyme catalyses H2O2 + AH2 = A + 2 H2O. Its function is as follows. Monomeric heme protein which primary function is to store oxygen and facilitate its diffusion within muscle tissues. Reversibly binds oxygen through a pentacoordinated heme iron and enables its timely and efficient release as needed during periods of heightened demand. Depending on the oxidative conditions of tissues and cells, and in addition to its ability to bind oxygen, it also has a nitrite reductase activity whereby it regulates the production of bioactive nitric oxide. Under stress conditions, like hypoxia and anoxia, it also protects cells against reactive oxygen species thanks to its pseudoperoxidase activity. This Ailuropoda melanoleuca (Giant panda) protein is Myoglobin (MB).